Reading from the N-terminus, the 658-residue chain is Exoribonuclease 2 (658 aa).

Residues 189 to 530 (REDLTSLYFT…VNHRLIKQVL (342 aa)) form the RNB domain. The 83-residue stretch at 576 to 658 (AVEFDCEIAD…ETRSIVGNII (83 aa)) folds into the S1 motif domain.

This sequence belongs to the RNR ribonuclease family. RNase II subfamily.

It is found in the cytoplasm. The enzyme catalyses Exonucleolytic cleavage in the 3'- to 5'-direction to yield nucleoside 5'-phosphates.. Involved in mRNA degradation. Hydrolyzes single-stranded polyribonucleotides processively in the 3' to 5' direction. The sequence is that of Exoribonuclease 2 from Actinobacillus pleuropneumoniae serotype 7 (strain AP76).